The primary structure comprises 341 residues: HTH-type sugar sensing transcriptional regulator TrmBL1 (341 aa).

A DNA-binding region (H-T-H motif) is located at residues 32–53 (SKATDVTKESGIPHTRIYDVLS).

It belongs to the transcriptional regulator TrmB family. In terms of assembly, homotetramer. Forms homooctamers in the presence of maltotriose or maltose.

Its activity is regulated as follows. Repressor activity is regulated by binding of different sugars to TrmBL1. Binding of maltose and maltotriose results in derepression of the target genes. However, high sugar concentration results in formation of octamers with high affinity for DNA, which may prevent transcription of target genes. In terms of biological role, global transcriptional repressor of the maltodextrin transport gene cluster (mdxE operon) and most likely of all genes encoding glycolytic enzymes. Acts by binding to the conserved TGM (Thermococcales-Glycolytic-Motif) sequences in their promoter region. Can also interact with non-TGM sequences. In Pyrococcus furiosus (strain ATCC 43587 / DSM 3638 / JCM 8422 / Vc1), this protein is HTH-type sugar sensing transcriptional regulator TrmBL1 (trmBL1).